We begin with the raw amino-acid sequence, 451 residues long: Probable beta-1,4-xylosyltransferase GT43E (451 aa).

The Cytoplasmic portion of the chain corresponds to 1–88 (MVSSRRNTGG…SKSRGLSCKR (88 aa)). Residues 89–109 (LAFHLFVCFMVGIFIGFMPFF) form a helical; Signal-anchor for type II membrane protein membrane-spanning segment. The Lumenal portion of the chain corresponds to 110-451 (SVDVSQKIVS…KNLDAVIPVT (342 aa)). 2 N-linked (GlcNAc...) asparagine glycosylation sites follow: asparagine 260 and asparagine 366.

It belongs to the glycosyltransferase 43 family.

The protein resides in the golgi apparatus membrane. In terms of biological role, probable beta-1,4-xylosyltransferase involved in xylan biosynthesis in cell walls. In Oryza sativa subsp. japonica (Rice), this protein is Probable beta-1,4-xylosyltransferase GT43E.